We begin with the raw amino-acid sequence, 149 residues long: Deoxyuridine 5'-triphosphate nucleotidohydrolase (149 aa).

Substrate is bound by residues 68 to 70 (RSG), asparagine 81, 85 to 87 (LID), and methionine 95.

It belongs to the dUTPase family. Requires Mg(2+) as cofactor.

It carries out the reaction dUTP + H2O = dUMP + diphosphate + H(+). It functions in the pathway pyrimidine metabolism; dUMP biosynthesis; dUMP from dCTP (dUTP route): step 2/2. In terms of biological role, this enzyme is involved in nucleotide metabolism: it produces dUMP, the immediate precursor of thymidine nucleotides and it decreases the intracellular concentration of dUTP so that uracil cannot be incorporated into DNA. This Bordetella bronchiseptica (strain ATCC BAA-588 / NCTC 13252 / RB50) (Alcaligenes bronchisepticus) protein is Deoxyuridine 5'-triphosphate nucleotidohydrolase.